Consider the following 505-residue polypeptide: 2,3-bisphosphoglycerate-independent phosphoglycerate mutase (505 aa).

Residues aspartate 12 and serine 62 each contribute to the Mn(2+) site. The active-site Phosphoserine intermediate is serine 62. Residues histidine 123, 153 to 154 (RD), arginine 185, arginine 191, 257 to 260 (RPDR), and lysine 330 contribute to the substrate site. 5 residues coordinate Mn(2+): aspartate 397, histidine 401, aspartate 438, histidine 439, and histidine 456.

It belongs to the BPG-independent phosphoglycerate mutase family. Monomer. Mn(2+) is required as a cofactor.

The catalysed reaction is (2R)-2-phosphoglycerate = (2R)-3-phosphoglycerate. Its pathway is carbohydrate degradation; glycolysis; pyruvate from D-glyceraldehyde 3-phosphate: step 3/5. Catalyzes the interconversion of 2-phosphoglycerate and 3-phosphoglycerate. In Staphylococcus aureus (strain MRSA252), this protein is 2,3-bisphosphoglycerate-independent phosphoglycerate mutase.